A 205-amino-acid polypeptide reads, in one-letter code: Spermatogenesis-associated protein 24 (205 aa).

Residues 17 to 166 (LALDQLRDVI…QQKQIFRNHM (150 aa)) adopt a coiled-coil conformation. The tract at residues 138–185 (EDILNGKENEIKELQQVISQQKQIFRNHMSDFRIQKQQESYMAQVLDQ) is required for interaction with CBX5 and TBPL1. The tract at residues 180–205 (AQVLDQKHKKASGTRQARSHQHPREK) is disordered. The segment covering 186 to 205 (KHKKASGTRQARSHQHPREK) has biased composition (basic residues).

The protein belongs to the SPATA24 family. Homodimer. Interacts with CBX3, CBX5, GMNN, GTF2B, TBPL1 and the polycomb proteins PHCF2, RNF2 and SCMH1 but not with CBX1 or PCGF2.

It is found in the cytoplasm. Its subcellular location is the nucleus. The protein resides in the nucleolus. The protein localises to the nucleoplasm. Functionally, binds DNA with high affinity but does not bind to TATA boxes. Synergises with GMNN and TBP in activation of TATA box-containing promoters and with GMNN and TBPL1 in activation of the NF1 TATA-less promoter. May play a role in cytoplasm movement and removal during spermiogenesis. In Homo sapiens (Human), this protein is Spermatogenesis-associated protein 24 (SPATA24).